Consider the following 101-residue polypeptide: UPF0235 protein MmarC7_0309 (101 aa).

It belongs to the UPF0235 family.

This chain is UPF0235 protein MmarC7_0309, found in Methanococcus maripaludis (strain C7 / ATCC BAA-1331).